We begin with the raw amino-acid sequence, 368 residues long: N-acetylneuraminate epimerase (368 aa).

Positions 1–19 are cleaved as a signal peptide; sequence MNKTITALAIIMASFAANA. Kelch repeat units follow at residues 40-84, 86-137, 139-173, 174-219, 222-265, 287-336, and 338-367; these read TVYI…AFID, NLYV…FVHN, KAYV…KINA, YYFD…VNKG, TWLI…VAGG, ENYQ…PWNN, and LLII…VTVQ. Glu-228 (proton acceptor) is an active-site residue.

This sequence belongs to the NanM family. As to quaternary structure, homodimer.

Its subcellular location is the periplasm. The enzyme catalyses N-acetyl-alpha-neuraminate = N-acetyl-beta-neuraminate. In terms of biological role, converts alpha-N-acetylneuranimic acid (Neu5Ac) to the beta-anomer, accelerating the equilibrium between the alpha- and beta-anomers. Probably facilitates sialidase-negative bacteria to compete successfully for limited amounts of extracellular Neu5Ac, which is likely taken up in the beta-anomer. In addition, the rapid removal of sialic acid from solution might be advantageous to the bacterium to damp down host responses. The polypeptide is N-acetylneuraminate epimerase (Escherichia coli O139:H28 (strain E24377A / ETEC)).